A 451-amino-acid chain; its full sequence is Heme sensor protein HssS (451 aa).

2 helical membrane passes run 9-29 and 164-184; these read IAIYAITVILFSALMSFLFTN and IFLAVLITLLLIISISLVIAS. The 53-residue stretch at 186–238 folds into the HAMP domain; sequence YSIIKPVTALKNATTRIMKGDFSTPIKQTRHDEIGTLQSRFNTMRQNLGQVDQ. Residues 246–451 enclose the Histidine kinase domain; that stretch reads NVSHEVKTPL…KTQFIVKLFI (206 aa). Histidine 249 bears the Phosphohistidine; by autocatalysis mark.

In terms of processing, autophosphorylated.

Its subcellular location is the cell membrane. It carries out the reaction ATP + protein L-histidine = ADP + protein N-phospho-L-histidine.. Member of the two-component regulatory system HssS/HssR involved in intracellular heme homeostasis and tempering of staphylococcal virulence. HssS functions as a heme sensor histidine kinase which is autophosphorylated at a histidine residue and transfers its phosphate group to an aspartate residue of HssR. HssR/HssS activates the expression of HrtAB, an efflux pump, in response to extracellular heme, hemin, hemoglobin or blood. The polypeptide is Heme sensor protein HssS (hssS) (Staphylococcus epidermidis (strain ATCC 35984 / DSM 28319 / BCRC 17069 / CCUG 31568 / BM 3577 / RP62A)).